Consider the following 471-residue polypeptide: Alpha-amylase (471 aa).

Position 1 is a pyrrolidone carboxylic acid (Q1). The cysteines at positions 28 and 84 are disulfide-linked. 3 residues coordinate Ca(2+): N98, R146, and D155. A disulfide bond links C134 and C148. Chloride is bound at residue R183. Residue D185 is the Nucleophile of the active site. H189 contributes to the Ca(2+) binding site. The active-site Proton donor is E222. Chloride is bound by residues N285 and R321. Polar residues predominate over residues 326–343 (FDFTDNDQGPPQDGSGNL). Positions 326–346 (FDFTDNDQGPPQDGSGNLISP) are disordered. Disulfide bonds link C354–C360 and C425–C437.

Belongs to the glycosyl hydrolase 13 family. In terms of assembly, monomer. Ca(2+) serves as cofactor. Chloride is required as a cofactor.

The enzyme catalyses Endohydrolysis of (1-&gt;4)-alpha-D-glucosidic linkages in polysaccharides containing three or more (1-&gt;4)-alpha-linked D-glucose units.. This chain is Alpha-amylase, found in Tenebrio molitor (Yellow mealworm beetle).